The following is a 331-amino-acid chain: DNA-directed RNA polymerase subunit alpha (331 aa).

The alpha N-terminal domain (alpha-NTD) stretch occupies residues 1–233 (MVREEIAVST…DLFLPFLHAE (233 aa)). The alpha C-terminal domain (alpha-CTD) stretch occupies residues 268-331 (ALKRVFIDQS…GILQKRFAID (64 aa)).

Belongs to the RNA polymerase alpha chain family. In plastids the minimal PEP RNA polymerase catalytic core is composed of four subunits: alpha, beta, beta', and beta''. When a (nuclear-encoded) sigma factor is associated with the core the holoenzyme is formed, which can initiate transcription.

It localises to the plastid. It is found in the chloroplast. The catalysed reaction is RNA(n) + a ribonucleoside 5'-triphosphate = RNA(n+1) + diphosphate. Functionally, DNA-dependent RNA polymerase catalyzes the transcription of DNA into RNA using the four ribonucleoside triphosphates as substrates. This chain is DNA-directed RNA polymerase subunit alpha, found in Illicium oligandrum (Star anise).